A 139-amino-acid chain; its full sequence is Large ribosomal subunit protein uL13 (139 aa).

The protein belongs to the universal ribosomal protein uL13 family. Part of the 50S ribosomal subunit.

Its function is as follows. This protein is one of the early assembly proteins of the 50S ribosomal subunit, although it is not seen to bind rRNA by itself. It is important during the early stages of 50S assembly. The sequence is that of Large ribosomal subunit protein uL13 from Aliarcobacter butzleri (strain RM4018) (Arcobacter butzleri).